Here is a 261-residue protein sequence, read N- to C-terminus: tRNA (guanine-N(7)-)-methyltransferase (261 aa).

S-adenosyl-L-methionine is bound by residues E75, E100, D127, and D150. Residue D150 is part of the active site. Substrate is bound at residue K154. Residues 156-161 (RHNKRR) form an interaction with RNA region. Substrate-binding positions include D186 and 223 to 226 (THFE).

It belongs to the class I-like SAM-binding methyltransferase superfamily. TrmB family.

The catalysed reaction is guanosine(46) in tRNA + S-adenosyl-L-methionine = N(7)-methylguanosine(46) in tRNA + S-adenosyl-L-homocysteine. The protein operates within tRNA modification; N(7)-methylguanine-tRNA biosynthesis. Its function is as follows. Catalyzes the formation of N(7)-methylguanine at position 46 (m7G46) in tRNA. The sequence is that of tRNA (guanine-N(7)-)-methyltransferase from Xanthomonas campestris pv. campestris (strain 8004).